Reading from the N-terminus, the 219-residue chain is MIKKLSIVILFSCISFVLSTNFCNKELCKRQNGPQSFTYLKHIGCRHTGKNANTCPRDAKILPMSTKRKNLILKVHNRLRNKVALGKLPGFPKAARMPILRWDDELAYLAELNVKQCKMEHDQCRNTDKFKYAGQNLAYTMGTPQKNAVRIKKLIRAWFKEHENATASFIDKYRDHPQGRVIGHFTAMIQDRTDTVGCAILRHSGNKYFFWPVIMVLQI.

The signal sequence occupies residues 1 to 19; it reads MIKKLSIVILFSCISFVLS. 3 disulfide bridges follow: Cys23-Cys45, Cys28-Cys124, and Cys55-Cys117. Residues 73–211 enclose the SCP domain; the sequence is LKVHNRLRNK…RHSGNKYFFW (139 aa).

It belongs to the CRISP family. As to expression, expressed in salivary glands.

It is found in the secreted. The sequence is that of Antigen 5 like allergen Cul n 1 from Culicoides nubeculosus (Biting midge).